The primary structure comprises 519 residues: Glutamate--cysteine ligase (519 aa).

Belongs to the glutamate--cysteine ligase type 1 family. Type 1 subfamily.

The enzyme catalyses L-cysteine + L-glutamate + ATP = gamma-L-glutamyl-L-cysteine + ADP + phosphate + H(+). The protein operates within sulfur metabolism; glutathione biosynthesis; glutathione from L-cysteine and L-glutamate: step 1/2. This Photorhabdus laumondii subsp. laumondii (strain DSM 15139 / CIP 105565 / TT01) (Photorhabdus luminescens subsp. laumondii) protein is Glutamate--cysteine ligase.